A 163-amino-acid chain; its full sequence is Single-stranded DNA-binding protein 2 (163 aa).

The SSB domain occupies 1-104; sequence MINNVVLVGR…VVADNFQMLE (104 aa). The disordered stretch occupies residues 109–163; the sequence is REGGSTGSFNGGFNNNTSSSNSYSAPAQQTPNFGRDDSPFGNSNPMDISDDDLPF. A compositionally biased stretch (low complexity) spans 119–130; sequence GGFNNNTSSSNS. Residues 131-140 show a composition bias toward polar residues; the sequence is YSAPAQQTPN. The Important for interaction with partner proteins motif lies at 158 to 163; sequence DDDLPF.

As to quaternary structure, homotetramer.

Functionally, plays an important role in DNA replication, recombination and repair. Binds to ssDNA and to an array of partner proteins to recruit them to their sites of action during DNA metabolism. The protein is Single-stranded DNA-binding protein 2 (ssb2) of Streptococcus pyogenes serotype M18 (strain MGAS8232).